The sequence spans 225 residues: Probable polyketide biosynthesis zinc-dependent hydrolase BaeB (225 aa).

Zn(2+) is bound by residues His-62, His-64, Asp-66, His-67, His-123, Asp-140, and His-181.

It belongs to the metallo-beta-lactamase superfamily. The cofactor is Zn(2+).

The protein resides in the cytoplasm. It functions in the pathway antibiotic biosynthesis; bacillaene biosynthesis. In terms of biological role, probably involved in some intermediate steps for the synthesis of the antibiotic polyketide bacillaene which is involved in secondary metabolism. This is Probable polyketide biosynthesis zinc-dependent hydrolase BaeB (baeB) from Bacillus velezensis (strain DSM 23117 / BGSC 10A6 / LMG 26770 / FZB42) (Bacillus amyloliquefaciens subsp. plantarum).